The sequence spans 557 residues: Pre-mRNA-processing protein 45 (557 aa).

Disordered regions lie at residues 1 to 32 (MALLSEELSSILPNPDFDDEEEDYVERETSHA), 208 to 243 (EQDPMEPPKFRHKKVPRGPPSPPPPVLHSPPRKVSA), and 316 to 444 (MAEK…MSSD). Positions 16 to 25 (DFDDEEEDYV) are enriched in acidic residues. The segment covering 224-235 (RGPPSPPPPVLH) has biased composition (pro residues). Serine 228 and serine 236 each carry phosphoserine. The segment covering 316-327 (MAEKEKQEKEQR) has biased composition (basic and acidic residues). At serine 376 the chain carries Phosphoserine. Basic and acidic residues predominate over residues 386–430 (EAFRRRQELRRERRRQAEKDLRLSRMGAEKRAKLAEKDRPRDVAE).

Belongs to the SNW family. As to quaternary structure, homodimer. Interacts with cyp1 and the small 23 kDa subunit of the splicing factor U2AF (u2af23). Belongs to the 40S cdc5-associated complex (or cwf complex), a spliceosome sub-complex reminiscent of a late-stage spliceosome composed of the U2, U5 and U6 snRNAs and at least brr2, cdc5, cwf2/prp3, cwf3/syf1, cwf4/syf3, cwf5/ecm2, spp42/cwf6, cwf7/spf27, cwf8, cwf9, cwf10, cwf11, cwf12, prp45/cwf13, cwf14, cwf15, cwf16, cwf17, cwf18, cwf19, cwf20, cwf21, cwf22, cwf23, cwf24, cwf25, cwf26, cyp7/cwf27, cwf28, cwf29/ist3, lea1, msl1, prp5/cwf1, prp10, prp12/sap130, prp17, prp22, sap61, sap62, sap114, sap145, slu7, smb1, smd1, smd3, smf1, smg1 and syf2.

The protein resides in the nucleus. Functionally, involved in pre-mRNA splicing. This is Pre-mRNA-processing protein 45 (prp45) from Schizosaccharomyces pombe (strain 972 / ATCC 24843) (Fission yeast).